The following is a 628-amino-acid chain: tRNA uridine 5-carboxymethylaminomethyl modification enzyme MnmG (628 aa).

13–18 (GAGHAG) lines the FAD pocket. Residue 273–287 (GPRYCPSIEDKIVRF) participates in NAD(+) binding.

The protein belongs to the MnmG family. As to quaternary structure, homodimer. Heterotetramer of two MnmE and two MnmG subunits. It depends on FAD as a cofactor.

The protein localises to the cytoplasm. Its function is as follows. NAD-binding protein involved in the addition of a carboxymethylaminomethyl (cmnm) group at the wobble position (U34) of certain tRNAs, forming tRNA-cmnm(5)s(2)U34. The sequence is that of tRNA uridine 5-carboxymethylaminomethyl modification enzyme MnmG from Buchnera aphidicola subsp. Acyrthosiphon pisum (strain Tuc7).